Consider the following 252-residue polypeptide: Ribosomal RNA small subunit methyltransferase J (252 aa).

S-adenosyl-L-methionine is bound by residues Arg101 to Asp102, Glu117 to Arg118, Ser153 to Ser154, and Asp171.

This sequence belongs to the methyltransferase superfamily. RsmJ family.

The protein resides in the cytoplasm. The enzyme catalyses guanosine(1516) in 16S rRNA + S-adenosyl-L-methionine = N(2)-methylguanosine(1516) in 16S rRNA + S-adenosyl-L-homocysteine + H(+). Specifically methylates the guanosine in position 1516 of 16S rRNA. The protein is Ribosomal RNA small subunit methyltransferase J of Salmonella heidelberg (strain SL476).